The sequence spans 532 residues: tRNA-2-methylthio-N(6)-dimethylallyladenosine synthase 2 (532 aa).

A disordered region spans residues 1 to 21; the sequence is MTSTVAHGAGSAGPADDAEPM. The MTTase N-terminal domain occupies 24–140; that stretch reads RTYQVRTYGC…LPALLDRARH (117 aa). [4Fe-4S] cluster contacts are provided by cysteine 33, cysteine 69, cysteine 103, cysteine 177, cysteine 181, and cysteine 184. In terms of domain architecture, Radical SAM core spans 163–399; it reads RESAYAAWVS…VELQEQISLE (237 aa). One can recognise a TRAM domain in the interval 402–470; that stretch reads RAIVGQRVEL…PHHLIADGGI (69 aa). Residues 510-532 form a disordered region; that stretch reads TSCGSAGGCGSADGAGSSAGDPQ. Residues 523-532 are compositionally biased toward low complexity; the sequence is GAGSSAGDPQ.

The protein belongs to the methylthiotransferase family. MiaB subfamily. In terms of assembly, monomer. Requires [4Fe-4S] cluster as cofactor.

The protein localises to the cytoplasm. It catalyses the reaction N(6)-dimethylallyladenosine(37) in tRNA + (sulfur carrier)-SH + AH2 + 2 S-adenosyl-L-methionine = 2-methylsulfanyl-N(6)-dimethylallyladenosine(37) in tRNA + (sulfur carrier)-H + 5'-deoxyadenosine + L-methionine + A + S-adenosyl-L-homocysteine + 2 H(+). In terms of biological role, catalyzes the methylthiolation of N6-(dimethylallyl)adenosine (i(6)A), leading to the formation of 2-methylthio-N6-(dimethylallyl)adenosine (ms(2)i(6)A) at position 37 in tRNAs that read codons beginning with uridine. This chain is tRNA-2-methylthio-N(6)-dimethylallyladenosine synthase 2, found in Mycobacterium marinum (strain ATCC BAA-535 / M).